Here is a 144-residue protein sequence, read N- to C-terminus: Large ribosomal subunit protein uL24 (144 aa).

The interval 1–22 is disordered; the sequence is MKFNKMVSSDRGKNRKRHFNAP. Residues 13–22 show a composition bias toward basic residues; it reads KNRKRHFNAP.

It belongs to the universal ribosomal protein uL24 family.

This chain is Large ribosomal subunit protein uL24 (RPL26), found in Littorina littorea (Common periwinkle).